A 314-amino-acid polypeptide reads, in one-letter code: Putative S-adenosyl-L-methionine-dependent methyltransferase MUL_4402 (314 aa).

S-adenosyl-L-methionine-binding positions include D132 and D161 to L162. Residues R291–A314 form a disordered region.

This sequence belongs to the UPF0677 family.

In terms of biological role, exhibits S-adenosyl-L-methionine-dependent methyltransferase activity. The protein is Putative S-adenosyl-L-methionine-dependent methyltransferase MUL_4402 of Mycobacterium ulcerans (strain Agy99).